A 273-amino-acid chain; its full sequence is SUMO-1 cysteine protease S273R (273 aa).

Active-site residues include histidine 168 and asparagine 187. Residue glutamine 226 coordinates substrate. Cysteine 232 functions as the Nucleophile in the catalytic mechanism.

Belongs to the peptidase C63 family.

It is found in the host cytoplasm. The protein resides in the virion. Its function is as follows. Cysteine protease that plays several role during infection including processing of the structural polyprotein or inhibition of the host immune response. Catalyzes the maturation of the pp220 and pp62 polyprotein precursors into core-shell proteins. Plays a role in the disruption of host pyroptosis via specific cleavage of gasdermin D/GSDMD. In addition, strongly decreases the host cGAS-STING signaling by targeting IKBKE via its enzymatic activity. Also impairs host FOXJ1-mediated antiviral effect via degradation of FOXJ1. The protein is SUMO-1 cysteine protease S273R of Ornithodoros (relapsing fever ticks).